A 367-amino-acid polypeptide reads, in one-letter code: 2-aminoethylphosphonate--pyruvate transaminase (367 aa).

Lys193 bears the N6-(pyridoxal phosphate)lysine mark.

The protein belongs to the class-V pyridoxal-phosphate-dependent aminotransferase family. PhnW subfamily. As to quaternary structure, homodimer. Pyridoxal 5'-phosphate serves as cofactor.

The enzyme catalyses (2-aminoethyl)phosphonate + pyruvate = phosphonoacetaldehyde + L-alanine. Functionally, involved in phosphonate degradation. In Vibrio parahaemolyticus serotype O3:K6 (strain RIMD 2210633), this protein is 2-aminoethylphosphonate--pyruvate transaminase.